A 126-amino-acid polypeptide reads, in one-letter code: Cyclin-dependent kinase 2-associated protein 2 (126 aa).

Residues 1 to 48 (MSYKPIAPAPSSTPGSSTPGPGTPVPTGSVPSPSGSVPGAGAPFRPLF) are disordered. Positions 9-43 (APSSTPGSSTPGPGTPVPTGSVPSPSGSVPGAGAP) are enriched in low complexity. An interaction with CDK2 region spans residues 64–106 (PPGAQGSQSTYTDLLSVIEEMGKEIRPTYAGSKSAMERLKRGI).

It belongs to the CDK2AP family. In terms of assembly, component of the nucleosome remodeling and deacetylase (NuRD) repressor complex, composed of core proteins MTA1, MTA2, MTA3, RBBP4, RBBP7, HDAC1, HDAC2, MBD2, MBD3, and peripherally associated proteins CDK2AP1, CDK2AP2, GATAD2A, GATAD2B, CHD3, CHD4 and CHD5. The exact stoichiometry of the NuRD complex is unknown, and some subunits such as MBD2 and MBD3, GATAD2A and GATAD2B, and CHD3, CHD4 and CHD5 define mutually exclusive NuRD complexes. Interacts with CDK2AP1. Interacts with CDK2. Interacts with MAPK1. Phosphorylated by MAPK1 and CDK2. Ubiquitous.

It is found in the cytoplasm. The protein localises to the nucleus. Functionally, acts as a component of the histone deacetylase NuRD complex which participates in the remodeling of chromatin. Inhibits cell cycle G1/S phase transition by repressing CDK2 expression and activation; represses CDK2 activation by inhibiting its interaction with cyclin E and A. Plays a role in regulating the self-renewal of embryonic stem cells (ESCs) and in maintaining cell survival during terminal differentiation of ESCs. Regulates microtubule organization of metaphase II oocytes. The polypeptide is Cyclin-dependent kinase 2-associated protein 2 (CDK2AP2) (Homo sapiens (Human)).